Consider the following 379-residue polypeptide: UDP-4-amino-4-deoxy-L-arabinose--oxoglutarate aminotransferase (379 aa).

Position 182 is an N6-(pyridoxal phosphate)lysine (lysine 182).

Belongs to the DegT/DnrJ/EryC1 family. ArnB subfamily. As to quaternary structure, homodimer. Pyridoxal 5'-phosphate serves as cofactor.

It catalyses the reaction UDP-4-amino-4-deoxy-beta-L-arabinose + 2-oxoglutarate = UDP-beta-L-threo-pentopyranos-4-ulose + L-glutamate. The protein operates within nucleotide-sugar biosynthesis; UDP-4-deoxy-4-formamido-beta-L-arabinose biosynthesis; UDP-4-deoxy-4-formamido-beta-L-arabinose from UDP-alpha-D-glucuronate: step 2/3. It participates in bacterial outer membrane biogenesis; lipopolysaccharide biosynthesis. Functionally, catalyzes the conversion of UDP-4-keto-arabinose (UDP-Ara4O) to UDP-4-amino-4-deoxy-L-arabinose (UDP-L-Ara4N). The modified arabinose is attached to lipid A and is required for resistance to polymyxin and cationic antimicrobial peptides. The sequence is that of UDP-4-amino-4-deoxy-L-arabinose--oxoglutarate aminotransferase from Salmonella choleraesuis (strain SC-B67).